The primary structure comprises 134 residues: Putative pre-16S rRNA nuclease (134 aa).

It belongs to the YqgF nuclease family.

It localises to the cytoplasm. In terms of biological role, could be a nuclease involved in processing of the 5'-end of pre-16S rRNA. In Helicobacter pylori (strain HPAG1), this protein is Putative pre-16S rRNA nuclease.